The chain runs to 753 residues: 5-methyltetrahydropteroyltriglutamate--homocysteine methyltransferase (753 aa).

5-methyltetrahydropteroyltri-L-glutamate-binding positions include 17–20 (RELK) and lysine 117. L-homocysteine contacts are provided by residues 431-433 (IGS) and glutamate 484. L-methionine-binding positions include 431 to 433 (IGS) and glutamate 484. Residues 515 to 516 (RC) and tryptophan 561 each bind 5-methyltetrahydropteroyltri-L-glutamate. Residue aspartate 599 participates in L-homocysteine binding. Aspartate 599 lines the L-methionine pocket. A 5-methyltetrahydropteroyltri-L-glutamate-binding site is contributed by glutamate 605. Zn(2+) is bound by residues histidine 641, cysteine 643, and glutamate 665. Catalysis depends on histidine 694, which acts as the Proton donor. Residue cysteine 726 coordinates Zn(2+).

Belongs to the vitamin-B12 independent methionine synthase family. Requires Zn(2+) as cofactor.

It catalyses the reaction 5-methyltetrahydropteroyltri-L-glutamate + L-homocysteine = tetrahydropteroyltri-L-glutamate + L-methionine. It participates in amino-acid biosynthesis; L-methionine biosynthesis via de novo pathway; L-methionine from L-homocysteine (MetE route): step 1/1. Its function is as follows. Catalyzes the transfer of a methyl group from 5-methyltetrahydrofolate to homocysteine resulting in methionine formation. The sequence is that of 5-methyltetrahydropteroyltriglutamate--homocysteine methyltransferase from Shigella boydii serotype 18 (strain CDC 3083-94 / BS512).